Here is a 460-residue protein sequence, read N- to C-terminus: Argininosuccinate lyase (460 aa).

It belongs to the lyase 1 family. Argininosuccinate lyase subfamily.

It localises to the cytoplasm. The enzyme catalyses 2-(N(omega)-L-arginino)succinate = fumarate + L-arginine. It participates in amino-acid biosynthesis; L-arginine biosynthesis; L-arginine from L-ornithine and carbamoyl phosphate: step 3/3. In Streptococcus mutans serotype c (strain ATCC 700610 / UA159), this protein is Argininosuccinate lyase.